The following is a 251-amino-acid chain: MPAKLSVNLNAIAMLRNRRDLPWPDVAHFGQIALSAGASGLTVHPRPDQRHIRFSDLPVLRALIDDRFPGAEFNIEGYPTEDFLVLCEKTQPEQVTLVPDDPSQATSDHGWDFRKHAVFLKDVVGRLKAGGMRVSLFADGDGEREPVELAAETGAARIELYTGPYGGCFDDTQKADLLVEKLGQTADHAAALGLAVNAGHDLTVANLPKLMKRIPNLAEVSIGHGLTADAMEYGMAETVRRFCQACGQRNS.

3-amino-2-oxopropyl phosphate is bound by residues N8 and R19. H44 acts as the Proton acceptor in catalysis. Residues R46 and H51 each coordinate 1-deoxy-D-xylulose 5-phosphate. E76 (proton acceptor) is an active-site residue. T106 is a binding site for 1-deoxy-D-xylulose 5-phosphate. Catalysis depends on H200, which acts as the Proton donor. Residues D201 and 223–224 (GH) each bind 3-amino-2-oxopropyl phosphate.

Belongs to the PNP synthase family. As to quaternary structure, homooctamer; tetramer of dimers.

It is found in the cytoplasm. It carries out the reaction 3-amino-2-oxopropyl phosphate + 1-deoxy-D-xylulose 5-phosphate = pyridoxine 5'-phosphate + phosphate + 2 H2O + H(+). It participates in cofactor biosynthesis; pyridoxine 5'-phosphate biosynthesis; pyridoxine 5'-phosphate from D-erythrose 4-phosphate: step 5/5. Functionally, catalyzes the complicated ring closure reaction between the two acyclic compounds 1-deoxy-D-xylulose-5-phosphate (DXP) and 3-amino-2-oxopropyl phosphate (1-amino-acetone-3-phosphate or AAP) to form pyridoxine 5'-phosphate (PNP) and inorganic phosphate. The sequence is that of Pyridoxine 5'-phosphate synthase from Agrobacterium fabrum (strain C58 / ATCC 33970) (Agrobacterium tumefaciens (strain C58)).